Consider the following 349-residue polypeptide: Hydroxymethylglutaryl-CoA synthase (349 aa).

Residues Asp30 and Ala31 each coordinate (3S)-3-hydroxy-3-methylglutaryl-CoA. Glu82 acts as the Proton donor/acceptor in catalysis. Residues Cys114 and Thr155 each coordinate (3S)-3-hydroxy-3-methylglutaryl-CoA. The active-site Acyl-thioester intermediate is the Cys114. Arg203 provides a ligand contact to CoA. (3S)-3-hydroxy-3-methylglutaryl-CoA is bound by residues Thr205 and His238. The active-site Proton donor/acceptor is the His238. Lys243 is a CoA binding site. Positions 270 and 300 each coordinate (3S)-3-hydroxy-3-methylglutaryl-CoA.

Belongs to the thiolase-like superfamily. Archaeal HMG-CoA synthase family. In terms of assembly, interacts with acetoacetyl-CoA thiolase that catalyzes the precedent step in the pathway and with a DUF35 protein. The acetoacetyl-CoA thiolase/HMG-CoA synthase complex channels the intermediate via a fused CoA-binding site, which allows for efficient coupling of the endergonic thiolase reaction with the exergonic HMGCS reaction.

It carries out the reaction acetoacetyl-CoA + acetyl-CoA + H2O = (3S)-3-hydroxy-3-methylglutaryl-CoA + CoA + H(+). Its pathway is metabolic intermediate biosynthesis; (R)-mevalonate biosynthesis; (R)-mevalonate from acetyl-CoA: step 2/3. Its function is as follows. Catalyzes the condensation of acetyl-CoA with acetoacetyl-CoA to form 3-hydroxy-3-methylglutaryl-CoA (HMG-CoA). Functions in the mevalonate (MVA) pathway leading to isopentenyl diphosphate (IPP), a key precursor for the biosynthesis of isoprenoid compounds that are building blocks of archaeal membrane lipids. The sequence is that of Hydroxymethylglutaryl-CoA synthase from Methanococcus maripaludis (strain C7 / ATCC BAA-1331).